The primary structure comprises 142 residues: ATP synthase epsilon chain (142 aa).

It belongs to the ATPase epsilon chain family. In terms of assembly, F-type ATPases have 2 components, CF(1) - the catalytic core - and CF(0) - the membrane proton channel. CF(1) has five subunits: alpha(3), beta(3), gamma(1), delta(1), epsilon(1). CF(0) has three main subunits: a, b and c.

The protein resides in the cell inner membrane. Produces ATP from ADP in the presence of a proton gradient across the membrane. The chain is ATP synthase epsilon chain from Shewanella baltica (strain OS185).